A 216-amino-acid chain; its full sequence is Pyridoxine/pyridoxamine 5'-phosphate oxidase (216 aa).

FMN contacts are provided by residues 64-69 (RVVLLK), 79-80 (FT), Lys85, Lys86, and Gln108. Position 69 (Lys69) interacts with substrate. Substrate-binding residues include Tyr126, Arg130, and Ser134. FMN contacts are provided by residues 143-144 (QS) and Trp188. 194–196 (RKH) serves as a coordination point for substrate. Arg198 is an FMN binding site.

Belongs to the pyridoxamine 5'-phosphate oxidase family. In terms of assembly, homodimer. It depends on FMN as a cofactor.

It catalyses the reaction pyridoxamine 5'-phosphate + O2 + H2O = pyridoxal 5'-phosphate + H2O2 + NH4(+). The catalysed reaction is pyridoxine 5'-phosphate + O2 = pyridoxal 5'-phosphate + H2O2. It participates in cofactor metabolism; pyridoxal 5'-phosphate salvage; pyridoxal 5'-phosphate from pyridoxamine 5'-phosphate: step 1/1. The protein operates within cofactor metabolism; pyridoxal 5'-phosphate salvage; pyridoxal 5'-phosphate from pyridoxine 5'-phosphate: step 1/1. Functionally, catalyzes the oxidation of either pyridoxine 5'-phosphate (PNP) or pyridoxamine 5'-phosphate (PMP) into pyridoxal 5'-phosphate (PLP). The sequence is that of Pyridoxine/pyridoxamine 5'-phosphate oxidase from Wolbachia pipientis wMel.